Consider the following 271-residue polypeptide: Zinc finger protein 501 (271 aa).

9 C2H2-type zinc fingers span residues 22-44, 50-72, 78-100, 106-128, 134-156, 162-184, 190-212, 218-240, and 246-268; these read SKCSECGRFFTQRSSLTQHQRIH, YVCSECGSCFRKQSNLTQHLRIH, YKCNECEKAFQTKAILVQHLRIH, YKCNECGKAFCQSPSLIKHQRIH, YKCAECGKAFSQSVCLTRHQRSH, FKCNECGKAFNQSACLMQHQRIH, YTCTECGKAFTQNSSLVEHERTH, YKCSECEKTFRKQAHLSEHYRIH, and YECFGCGKSFRHSSALLRHQRLH.

The protein belongs to the krueppel C2H2-type zinc-finger protein family.

It localises to the nucleus. The protein localises to the nucleolus. Functionally, may be involved in transcriptional regulation. Essential for Golgi structural integrity. The sequence is that of Zinc finger protein 501 (ZNF501) from Pongo abelii (Sumatran orangutan).